The primary structure comprises 189 residues: GTP cyclohydrolase 1 (189 aa).

Residues C79, H82, and C150 each contribute to the Zn(2+) site.

This sequence belongs to the GTP cyclohydrolase I family. As to quaternary structure, toroid-shaped homodecamer, composed of two pentamers of five dimers.

It catalyses the reaction GTP + H2O = 7,8-dihydroneopterin 3'-triphosphate + formate + H(+). Its pathway is cofactor biosynthesis; 7,8-dihydroneopterin triphosphate biosynthesis; 7,8-dihydroneopterin triphosphate from GTP: step 1/1. The sequence is that of GTP cyclohydrolase 1 from Rickettsia massiliae (strain Mtu5).